The chain runs to 383 residues: Acetylornithine deacetylase (383 aa).

His80 contacts Zn(2+). The active site involves Asp82. Asp112 contributes to the Zn(2+) binding site. The active site involves Glu144. Zn(2+) is bound by residues Glu145, Glu169, and His355.

It belongs to the peptidase M20A family. ArgE subfamily. In terms of assembly, homodimer. Requires Zn(2+) as cofactor. The cofactor is Co(2+). Glutathione is required as a cofactor.

It is found in the cytoplasm. The catalysed reaction is N(2)-acetyl-L-ornithine + H2O = L-ornithine + acetate. It participates in amino-acid biosynthesis; L-arginine biosynthesis; L-ornithine from N(2)-acetyl-L-ornithine (linear): step 1/1. Its function is as follows. Catalyzes the hydrolysis of the amide bond of N(2)-acetylated L-amino acids. Cleaves the acetyl group from N-acetyl-L-ornithine to form L-ornithine, an intermediate in L-arginine biosynthesis pathway, and a branchpoint in the synthesis of polyamines. In Shigella dysenteriae serotype 1 (strain Sd197), this protein is Acetylornithine deacetylase.